The following is a 537-amino-acid chain: Zinc finger protein 835 (537 aa).

The tract at residues 12–109 (AELEGNWKHE…RERGGGPKKP (98 aa)) is disordered. The span at 63–77 (TISSPAATQASVPDD) shows a compositional bias: polar residues. A compositionally biased stretch (basic and acidic residues) spans 89–104 (SPKERHPDSRQRERGG). C2H2-type zinc fingers lie at residues 110 to 132 (WKCG…QRIH), 138 to 160 (FACP…QRTH), 166 to 188 (YACH…WRTH), 194 to 216 (HRCA…RRVH), 222 to 244 (YACA…QRIH), 250 to 272 (YECS…QRIH), 278 to 300 (YRCG…RRVH), 306 to 328 (YTCQ…RRIH), 334 to 356 (YACG…QRTH), 362 to 384 (YPCH…RLVH), 390 to 412 (YRCL…QKIH), 418 to 440 (YKCG…QRTH), 446 to 468 (YTCP…HIVH), and 474 to 496 (YECS…QRTH). The segment at 497-537 (ADSSGRLCPAPTPDSTPGLSQGGETCQQGCPGRNPRGPAED) is disordered. A compositionally biased stretch (polar residues) spans 509-524 (PDSTPGLSQGGETCQQ).

Belongs to the krueppel C2H2-type zinc-finger protein family.

The protein resides in the nucleus. May be involved in transcriptional regulation. This Homo sapiens (Human) protein is Zinc finger protein 835 (ZNF835).